Consider the following 349-residue polypeptide: Hydroxymethylglutaryl-CoA synthase (349 aa).

D30 and A31 together coordinate (3S)-3-hydroxy-3-methylglutaryl-CoA. The Proton donor/acceptor role is filled by E82. Residues C114 and T155 each coordinate (3S)-3-hydroxy-3-methylglutaryl-CoA. C114 (acyl-thioester intermediate) is an active-site residue. CoA is bound at residue R203. (3S)-3-hydroxy-3-methylglutaryl-CoA is bound by residues T205 and H238. H238 acts as the Proton donor/acceptor in catalysis. K243 serves as a coordination point for CoA. Residues N270 and S300 each coordinate (3S)-3-hydroxy-3-methylglutaryl-CoA.

It belongs to the thiolase-like superfamily. Archaeal HMG-CoA synthase family. Interacts with acetoacetyl-CoA thiolase that catalyzes the precedent step in the pathway and with a DUF35 protein. The acetoacetyl-CoA thiolase/HMG-CoA synthase complex channels the intermediate via a fused CoA-binding site, which allows for efficient coupling of the endergonic thiolase reaction with the exergonic HMGCS reaction.

It carries out the reaction acetoacetyl-CoA + acetyl-CoA + H2O = (3S)-3-hydroxy-3-methylglutaryl-CoA + CoA + H(+). Its pathway is metabolic intermediate biosynthesis; (R)-mevalonate biosynthesis; (R)-mevalonate from acetyl-CoA: step 2/3. In terms of biological role, catalyzes the condensation of acetyl-CoA with acetoacetyl-CoA to form 3-hydroxy-3-methylglutaryl-CoA (HMG-CoA). Functions in the mevalonate (MVA) pathway leading to isopentenyl diphosphate (IPP), a key precursor for the biosynthesis of isoprenoid compounds that are building blocks of archaeal membrane lipids. This chain is Hydroxymethylglutaryl-CoA synthase, found in Methanococcus maripaludis (strain DSM 14266 / JCM 13030 / NBRC 101832 / S2 / LL).